Reading from the N-terminus, the 561-residue chain is MEPLQQQQQQQQQQQKQPHLAPLQMDAREKQGQQMREAQFLYAQKLVTQPTLLSATAGRPSGSTPLGPLARVPPTAAVAQVFERGNMNSEPEEEDGGLEDEDGDDEVAEVAEKETQAASKYFHVQKVARQDPRVAPMSNLLPAPGLPPHGQQAKEDHTKDASKASPSVSTAGQPNWNLDEQLKQNGGLAWSDDADGGRGREISRDFAKLYELDGDPERKEFLDDLFVFMQKRGTPINRIPIMAKQILDLYMLYKLVTEKGGLVEIINKKIWREITKGLNLPTSITSAAFTLRTQYMKYLYAYECEKKALSSPAELQAAIDGNRREGRRPSYSSSLFGYSPAAATAAAAAGAPALLSPPKIRFPILGLGSSSGTNTSSPRISPATTLRKGDGAPVTTVPVPNRLAVPVTLASQQAGTRTAALEQLRERLESGEPAEKKASRLSEEEQRLVQQAFQRNFFSMARQLPMKIRINGRAEDRAEASAAALNLTTSSIGSINMSVDIDGTTYAGVLFAQKPVVHLITGSAPQSLGSSASSSSSSHCSPSPTSSRGTPSAEPSTSWSL.

Position 1 is an N-acetylmethionine (M1). A compositionally biased stretch (low complexity) spans 1–17 (MEPLQQQQQQQQQQQKQ). 3 disordered regions span residues 1 to 36 (MEPLQQQQQQQQQQQKQPHLAPLQMDAREKQGQQMR), 53 to 122 (LSAT…SKYF), and 136 to 179 (PMSN…WNLD). Phosphoserine is present on S89. Positions 90 to 109 (EPEEEDGGLEDEDGDDEVAE) are enriched in acidic residues. Basic and acidic residues predominate over residues 152–162 (QAKEDHTKDAS). Positions 164 to 178 (ASPSVSTAGQPNWNL) are enriched in polar residues. S165 carries the phosphoserine modification. Residues 203–365 (SRDFAKLYEL…SPPKIRFPIL (163 aa)) form an interaction with RB1 region. The region spanning 215-307 (DPERKEFLDD…YLYAYECEKK (93 aa)) is the ARID domain. S311 is modified (phosphoserine). R361 carries the post-translational modification Asymmetric dimethylarginine. The interval 370 to 397 (SSGTNTSSPRISPATTLRKGDGAPVTTV) is disordered. The region spanning 419–517 (AALEQLRERL…GVLFAQKPVV (99 aa)) is the REKLES domain. An interaction with ARID3A region spans residues 490–513 (SSIGSINMSVDIDGTTYAGVLFAQ). Residues 523-552 (SAPQSLGSSASSSSSSHCSPSPTSSRGTPS) are compositionally biased toward low complexity. The segment at 523-561 (SAPQSLGSSASSSSSSHCSPSPTSSRGTPSAEPSTSWSL) is disordered.

In terms of assembly, heterodimer with ARID3A. Interacts with unphosphorylated RB1. Expressed in placenta, testis and leukocytes. Expressed in neuroblastoma. Present in K-562 erythrocytic leukemia cell line (at protein level).

The protein localises to the nucleus. In terms of biological role, transcription factor which may be involved in neuroblastoma growth and malignant transformation. Favors nuclear targeting of ARID3A. In Homo sapiens (Human), this protein is AT-rich interactive domain-containing protein 3B (ARID3B).